Consider the following 216-residue polypeptide: CASP-like protein 2U1 (216 aa).

Residues 1-30 are disordered; sequence MKQDTEMGEATNGYIGTPGTVPVSHAGNDS. Residues 1-37 are Cytoplasmic-facing; sequence MKQDTEMGEATNGYIGTPGTVPVSHAGNDSGMRRMRT. The chain crosses the membrane as a helical span at residues 38 to 58; it reads ASILMRLTAMALCVTALVTMV. Over 59–86 the chain is Extracellular; the sequence is TDKQTHYFNFASTTIVKTAEYTNVLALK. A helical membrane pass occupies residues 87–107; that stretch reads VFVYTNGVIAGYSLLQALWTI. Over 108 to 128 the chain is Cytoplasmic; sequence VAKSSYSTSKARLWTTFFLDQ. A helical membrane pass occupies residues 129-148; it reads FIVYVLIGVTGAATEVAYIA. Topologically, residues 149 to 170 are extracellular; it reads EKGESDVAWPKQCNNFGRFCSQ. A helical membrane pass occupies residues 171–191; that stretch reads VGASVIVCFVAILTLVFLAVL. Residues 192–216 are Cytoplasmic-facing; that stretch reads SAKQLFIHERPSRTTRKDGYYTSNQ.

The protein belongs to the Casparian strip membrane proteins (CASP) family. Homodimer and heterodimers.

The protein localises to the cell membrane. This Marchantia polymorpha (Common liverwort) protein is CASP-like protein 2U1.